The chain runs to 307 residues: UDP-3-O-acyl-N-acetylglucosamine deacetylase (307 aa).

Zn(2+) contacts are provided by His-78, His-241, and Asp-245. The active-site Proton donor is His-268.

The protein belongs to the LpxC family. Zn(2+) is required as a cofactor.

The enzyme catalyses a UDP-3-O-[(3R)-3-hydroxyacyl]-N-acetyl-alpha-D-glucosamine + H2O = a UDP-3-O-[(3R)-3-hydroxyacyl]-alpha-D-glucosamine + acetate. It functions in the pathway glycolipid biosynthesis; lipid IV(A) biosynthesis; lipid IV(A) from (3R)-3-hydroxytetradecanoyl-[acyl-carrier-protein] and UDP-N-acetyl-alpha-D-glucosamine: step 2/6. In terms of biological role, catalyzes the hydrolysis of UDP-3-O-myristoyl-N-acetylglucosamine to form UDP-3-O-myristoylglucosamine and acetate, the committed step in lipid A biosynthesis. The polypeptide is UDP-3-O-acyl-N-acetylglucosamine deacetylase (Bordetella avium (strain 197N)).